A 473-amino-acid chain; its full sequence is UDP-N-acetylmuramate--L-alanine ligase (473 aa).

123 to 129 (GTHGKTT) is an ATP binding site.

It belongs to the MurCDEF family.

It is found in the cytoplasm. The catalysed reaction is UDP-N-acetyl-alpha-D-muramate + L-alanine + ATP = UDP-N-acetyl-alpha-D-muramoyl-L-alanine + ADP + phosphate + H(+). The protein operates within cell wall biogenesis; peptidoglycan biosynthesis. In terms of biological role, cell wall formation. This Marinomonas sp. (strain MWYL1) protein is UDP-N-acetylmuramate--L-alanine ligase.